The sequence spans 275 residues: Large ribosomal subunit protein uL2 (275 aa).

Disordered stretches follow at residues 36 to 55 (KQSK…RHQG) and 223 to 275 (VAMN…RHKR). A compositionally biased stretch (polar residues) spans 39–48 (KNAGRNNSGR). The segment covering 229 to 239 (DHPHGGGEGRT) has biased composition (basic and acidic residues).

It belongs to the universal ribosomal protein uL2 family. Part of the 50S ribosomal subunit. Forms a bridge to the 30S subunit in the 70S ribosome.

Its function is as follows. One of the primary rRNA binding proteins. Required for association of the 30S and 50S subunits to form the 70S ribosome, for tRNA binding and peptide bond formation. It has been suggested to have peptidyltransferase activity; this is somewhat controversial. Makes several contacts with the 16S rRNA in the 70S ribosome. The chain is Large ribosomal subunit protein uL2 from Aromatoleum aromaticum (strain DSM 19018 / LMG 30748 / EbN1) (Azoarcus sp. (strain EbN1)).